A 484-amino-acid chain; its full sequence is Cathepsin F (484 aa).

A signal peptide spans 1–19 (MAPWLQLLSLLGLLPGAVA). The propeptide at 20 to 270 (APAQPRAASF…MKQAKSVGDL (251 aa)) is activation peptide. Residues N160 and N195 are each glycosylated (N-linked (GlcNAc...) asparagine). Cystine bridges form between C292-C333 and C326-C366. The active site involves C295. 2 N-linked (GlcNAc...) asparagine glycosylation sites follow: N367 and N378. C424 and C472 are oxidised to a cystine. H431 is an active-site residue. N440 is a glycosylation site (N-linked (GlcNAc...) asparagine). The active site involves N451.

It belongs to the peptidase C1 family. In terms of tissue distribution, high expression levels in heart, skeletal muscle, brain, testis and ovary; moderate levels in prostate, placenta, liver and colon; and no detectable expression in peripheral leukocytes and thymus.

The protein resides in the lysosome. The enzyme catalyses The recombinant enzyme cleaves synthetic substrates with Phe and Leu (better than Val) in P2, with high specificity constant (kcat/Km) comparable to that of cathepsin L.. Its function is as follows. Thiol protease which is believed to participate in intracellular degradation and turnover of proteins. Has also been implicated in tumor invasion and metastasis. This Homo sapiens (Human) protein is Cathepsin F (CTSF).